The chain runs to 358 residues: Peptide chain release factor 1 (358 aa).

The residue at position 233 (glutamine 233) is an N5-methylglutamine.

Belongs to the prokaryotic/mitochondrial release factor family. Post-translationally, methylated by PrmC. Methylation increases the termination efficiency of RF1.

It localises to the cytoplasm. Its function is as follows. Peptide chain release factor 1 directs the termination of translation in response to the peptide chain termination codons UAG and UAA. This is Peptide chain release factor 1 from Lysinibacillus sphaericus (strain C3-41).